The sequence spans 416 residues: Gamma-glutamyl phosphate reductase (416 aa).

The protein belongs to the gamma-glutamyl phosphate reductase family.

The protein localises to the cytoplasm. It catalyses the reaction L-glutamate 5-semialdehyde + phosphate + NADP(+) = L-glutamyl 5-phosphate + NADPH + H(+). It participates in amino-acid biosynthesis; L-proline biosynthesis; L-glutamate 5-semialdehyde from L-glutamate: step 2/2. In terms of biological role, catalyzes the NADPH-dependent reduction of L-glutamate 5-phosphate into L-glutamate 5-semialdehyde and phosphate. The product spontaneously undergoes cyclization to form 1-pyrroline-5-carboxylate. This Streptococcus equi subsp. zooepidemicus (strain MGCS10565) protein is Gamma-glutamyl phosphate reductase.